Here is a 101-residue protein sequence, read N- to C-terminus: NAD(P)H-quinone oxidoreductase subunit 4L, chloroplastic (101 aa).

The next 3 membrane-spanning stretches (helical) occupy residues 2–22 (MLEH…YGLI), 32–52 (MCLE…SDFF), and 61–81 (IFSI…LAIV).

Belongs to the complex I subunit 4L family. As to quaternary structure, NDH is composed of at least 16 different subunits, 5 of which are encoded in the nucleus.

Its subcellular location is the plastid. It localises to the chloroplast thylakoid membrane. The enzyme catalyses a plastoquinone + NADH + (n+1) H(+)(in) = a plastoquinol + NAD(+) + n H(+)(out). The catalysed reaction is a plastoquinone + NADPH + (n+1) H(+)(in) = a plastoquinol + NADP(+) + n H(+)(out). NDH shuttles electrons from NAD(P)H:plastoquinone, via FMN and iron-sulfur (Fe-S) centers, to quinones in the photosynthetic chain and possibly in a chloroplast respiratory chain. The immediate electron acceptor for the enzyme in this species is believed to be plastoquinone. Couples the redox reaction to proton translocation, and thus conserves the redox energy in a proton gradient. This Guizotia abyssinica (Niger) protein is NAD(P)H-quinone oxidoreductase subunit 4L, chloroplastic.